A 193-amino-acid chain; its full sequence is Probable molybdenum cofactor guanylyltransferase (193 aa).

GTP-binding positions include 9–11, Lys-21, Asp-64, and Asp-93; that span reads TAG. Asp-93 is a Mg(2+) binding site.

The protein belongs to the MobA family. It depends on Mg(2+) as a cofactor.

It localises to the cytoplasm. The catalysed reaction is Mo-molybdopterin + GTP + H(+) = Mo-molybdopterin guanine dinucleotide + diphosphate. In terms of biological role, transfers a GMP moiety from GTP to Mo-molybdopterin (Mo-MPT) cofactor (Moco or molybdenum cofactor) to form Mo-molybdopterin guanine dinucleotide (Mo-MGD) cofactor. The polypeptide is Probable molybdenum cofactor guanylyltransferase (Deinococcus radiodurans (strain ATCC 13939 / DSM 20539 / JCM 16871 / CCUG 27074 / LMG 4051 / NBRC 15346 / NCIMB 9279 / VKM B-1422 / R1)).